Reading from the N-terminus, the 196-residue chain is Small ribosomal subunit protein uS4c (196 aa).

Residues 17–36 (ALPGLTRKTPKSGSNLKKKF) form a disordered region. Residues 89-150 (MRLDNIVFRL…NQRSKRLVQN (62 aa)) enclose the S4 RNA-binding domain.

It belongs to the universal ribosomal protein uS4 family. As to quaternary structure, part of the 30S ribosomal subunit. Contacts protein S5. The interaction surface between S4 and S5 is involved in control of translational fidelity.

Its subcellular location is the plastid. It is found in the chloroplast. In terms of biological role, one of the primary rRNA binding proteins, it binds directly to 16S rRNA where it nucleates assembly of the body of the 30S subunit. Functionally, with S5 and S12 plays an important role in translational accuracy. The protein is Small ribosomal subunit protein uS4c (rps4) of Tragus racemosus (Carrot grass).